Here is a 284-residue protein sequence, read N- to C-terminus: UDP-N-acetylenolpyruvoylglucosamine reductase (284 aa).

One can recognise an FAD-binding PCMH-type domain in the interval 12–174 (KIGGRVKYLV…TRVMMSFKRE (163 aa)). Arg153 is a catalytic residue. The active-site Proton donor is the Ser203. Residue Glu274 is part of the active site.

Belongs to the MurB family. The cofactor is FAD.

Its subcellular location is the cytoplasm. The catalysed reaction is UDP-N-acetyl-alpha-D-muramate + NADP(+) = UDP-N-acetyl-3-O-(1-carboxyvinyl)-alpha-D-glucosamine + NADPH + H(+). Its pathway is cell wall biogenesis; peptidoglycan biosynthesis. Its function is as follows. Cell wall formation. This chain is UDP-N-acetylenolpyruvoylglucosamine reductase, found in Thermotoga petrophila (strain ATCC BAA-488 / DSM 13995 / JCM 10881 / RKU-1).